A 207-amino-acid polypeptide reads, in one-letter code: Imidazole glycerol phosphate synthase subunit HisH (207 aa).

Residues 1 to 206 (MMIVIDYDAG…KEYVYENTAR (206 aa)) form the Glutamine amidotransferase type-1 domain. C79 (nucleophile) is an active-site residue. Residues H181 and E183 contribute to the active site.

In terms of assembly, heterodimer of HisH and HisF.

It localises to the cytoplasm. It catalyses the reaction 5-[(5-phospho-1-deoxy-D-ribulos-1-ylimino)methylamino]-1-(5-phospho-beta-D-ribosyl)imidazole-4-carboxamide + L-glutamine = D-erythro-1-(imidazol-4-yl)glycerol 3-phosphate + 5-amino-1-(5-phospho-beta-D-ribosyl)imidazole-4-carboxamide + L-glutamate + H(+). It carries out the reaction L-glutamine + H2O = L-glutamate + NH4(+). Its pathway is amino-acid biosynthesis; L-histidine biosynthesis; L-histidine from 5-phospho-alpha-D-ribose 1-diphosphate: step 5/9. Its function is as follows. IGPS catalyzes the conversion of PRFAR and glutamine to IGP, AICAR and glutamate. The HisH subunit catalyzes the hydrolysis of glutamine to glutamate and ammonia as part of the synthesis of IGP and AICAR. The resulting ammonia molecule is channeled to the active site of HisF. This is Imidazole glycerol phosphate synthase subunit HisH from Streptococcus sanguinis (strain SK36).